The following is a 467-amino-acid chain: Trigger factor (467 aa).

The 88-residue stretch at 174-261 (SDIAILTFKG…LQDLKTRELP (88 aa)) folds into the PPIase FKBP-type domain. The tract at residues 439-467 (PKKALNEKVKSSKPKNTQKKTDKTKKDSP) is disordered. Basic and acidic residues predominate over residues 457–467 (KKTDKTKKDSP).

This sequence belongs to the FKBP-type PPIase family. Tig subfamily.

It is found in the cytoplasm. It catalyses the reaction [protein]-peptidylproline (omega=180) = [protein]-peptidylproline (omega=0). Its function is as follows. Involved in protein export. Acts as a chaperone by maintaining the newly synthesized protein in an open conformation. Functions as a peptidyl-prolyl cis-trans isomerase. This Prochlorococcus marinus (strain SARG / CCMP1375 / SS120) protein is Trigger factor.